The following is a 793-amino-acid chain: Short transient receptor potential channel 1 (793 aa).

The interval 1 to 30 (MMAALYPSTDLSGASSSSLPSSPSSSSPNE) is disordered. Residues 1-345 (MMAALYPSTD…FGQMSGYRRK (345 aa)) lie on the Cytoplasmic side of the membrane. Positions 15-28 (SSSSLPSSPSSSSP) are enriched in low complexity. ANK repeat units lie at residues 46–75 (LNEKLFLLACDKGDYYMVKEILEENSSGDL), 83–109 (LGRNAVTITIENENLDILQLLLDYGCQ), 111–156 (ADAL…EYST), and 158–180 (MDVAPVILAAHRNNYEILTMLLK). Positions 189, 193, 195, and 198 each coordinate Zn(2+). Positions 346–379 (PTCKKIMTVLTVGIFWPVLSLCYLIAPKSQFGRI) form an intramembrane region, discontinuously helical. The Cytoplasmic segment spans residues 380–386 (IHTPFMK). The helical transmembrane segment at 387 to 404 (FIIHGASYFTFLLLLNLY) threads the bilayer. Over 405 to 422 (SLVYHEDKKNTMGPALER) the chain is Extracellular. Residues 423–439 (IDYLLILWIIGMIWSDI) form a helical membrane-spanning segment. At 440–455 (KRLWYEGLEDFLEESR) the chain is on the cytoplasmic side. The helical transmembrane segment at 456-475 (NQLSFVMNSLYLATFALKEE) threads the bilayer. Topologically, residues 476-496 (AHNKFHDFADRKDWDAFHPTL) are extracellular. A helical membrane pass occupies residues 497-517 (VAEGLFAFANVLSYLRLFFYV). Over 518 to 536 (YTSSILGPLQISMGRMLQD) the chain is Cytoplasmic. The helical transmembrane segment at 537 to 558 (FGKFLGMFLLVLFSFTIGLTQL) threads the bilayer. The Extracellular portion of the chain corresponds to 559-623 (YDKGYTPKEQ…GEELQSFVGA (65 aa)). A disulfide bridge links C571 with C576. Residues 624–644 (FIVGTYNVVVVIVLTKLLVAM) traverse the membrane as a helical segment. Over 645–793 (LHKSFQLIAN…SKYAMFYPRN (149 aa)) the chain is Cytoplasmic.

The protein belongs to the transient receptor (TC 1.A.4) family. STrpC subfamily. TRPC1 sub-subfamily. As to quaternary structure, heterotetramer with TRPC4 and/or TRPC5. Forms a heteromeric ion channel with TRPC4, with a 1:3 TRPC1:TRPC4 stoichiometry. Unlike other TRP channel proteins, does not form a homomeric channel. Interacts with TRPC4AP. Interacts with ITPR3. Interacts with MX1 and RNF24. Interacts with FKBP4. Interacts with PLSCR1. Interacts with PKD2L2. Forms a heterotetramer with PKD2 with a 2:2 stoichiometry; has distinct channel properties separate from PKD2 or TRPC1 homomers alone. Post-translationally, activation of PRKCA induces phosphorylation of TRPC1 and subsequent Ca2+ entry into cells.

The protein localises to the cell membrane. It carries out the reaction Ca(2+)(in) = Ca(2+)(out). It catalyses the reaction Na(+)(in) = Na(+)(out). The catalysed reaction is Li(+)(in) = Li(+)(out). The enzyme catalyses Cs(+)(in) = Cs(+)(out). May be operated by a phosphatidylinositol second messenger system activated by receptor tyrosine kinases or G-protein coupled receptors. Also activated by intracellular calcium store depletion. Functionally, forms a receptor-activated non-selective calcium permeant cation channel. Forms a heteromeric ion channel with TRPC4 or TRPC5 that has reduced calcium permeability compared to the homomeric TRPC4 or TRPC5 channel. Also permeable to monovalent ions including sodium, lithium and cesium ions. This chain is Short transient receptor potential channel 1 (TRPC1), found in Bos taurus (Bovine).